The sequence spans 286 residues: Putative sensory transducer protein YfmS (286 aa).

Positions 68 to 286 (ITDAIRSNQK…KMAEKALEEE (219 aa)) constitute a Methyl-accepting transducer domain.

This sequence belongs to the methyl-accepting chemotaxis (MCP) protein family.

Its function is as follows. Chemotactic-signal transducers respond to changes in the concentration of attractants and repellents in the environment, transduce a signal from the outside to the inside of the cell, and facilitate sensory adaptation through the variation of the level of methylation. Attractants increase the level of methylation while repellents decrease the level of methylation. This is Putative sensory transducer protein YfmS (yfmS) from Bacillus subtilis (strain 168).